The following is a 1001-amino-acid chain: 26S proteasome non-ATPase regulatory subunit 1 homolog B (1001 aa).

At A2 the chain carries N-acetylalanine. Residue K166 forms a Glycyl lysine isopeptide (Lys-Gly) (interchain with G-Cter in ubiquitin) linkage. PC repeat units lie at residues 412–447, 452–485, 487–521, 522–555, 557–590, 591–626, 627–659, 661–695, 696–736, and 739–771; these read SATA…GGSP, GALY…EVIQ, GACL…VAGE, AAGI…EKII, GLAL…IIRY, GGMY…DVRR, TAVL…PHVR, GAAL…FVRQ, GALI…DTMS, and GAIL…TAVI. Disordered stretches follow at residues 853 to 896 and 954 to 1001; these read AKKE…TVEK and SLTD…YASP. Residues 854-863 are compositionally biased toward basic and acidic residues; the sequence is KKEAEQKAKA. S889 carries the post-translational modification Phosphoserine. Over residues 961-985 the composition is skewed to low complexity; that stretch reads STASPAVGAEAAGQAQQAATTSAMA.

This sequence belongs to the proteasome subunit S1 family. In terms of assembly, component of the 19S regulatory particle (RP/PA700) base subcomplex of the 26S proteasome. The 26S proteasome is composed of a core protease (CP), known as the 20S proteasome, capped at one or both ends by the 19S regulatory particle (RP/PA700). The RP/PA700 complex is composed of at least 17 different subunits in two subcomplexes, the base and the lid, which form the portions proximal and distal to the 20S proteolytic core, respectively.

Its function is as follows. Acts as a regulatory subunit of the 26 proteasome which is involved in the ATP-dependent degradation of ubiquitinated proteins. The protein is 26S proteasome non-ATPase regulatory subunit 1 homolog B (RPN2B) of Arabidopsis thaliana (Mouse-ear cress).